The chain runs to 727 residues: Procollagen-lysine,2-oxoglutarate 5-dioxygenase 1 (727 aa).

The first 18 residues, 1-18 (MRPLLLLALLGWLLLAEA), serve as a signal peptide directing secretion. 3 N-linked (GlcNAc...) asparagine glycosylation sites follow: Asn-163, Asn-197, and Asn-538. The region spanning 636–727 (QFDLAFVVRY…RYIAVSFVDP (92 aa)) is the Fe2OG dioxygenase domain. Fe cation is bound by residues His-656 and Asp-658. Asn-686 carries an N-linked (GlcNAc...) asparagine glycan. His-708 is a Fe cation binding site. The active site involves Arg-718.

Homodimer. Identified in a complex with P3H3 and P3H4. The cofactor is Fe(2+). L-ascorbate is required as a cofactor.

The protein localises to the rough endoplasmic reticulum membrane. The catalysed reaction is L-lysyl-[collagen] + 2-oxoglutarate + O2 = (5R)-5-hydroxy-L-lysyl-[collagen] + succinate + CO2. In terms of biological role, part of a complex composed of PLOD1, P3H3 and P3H4 that catalyzes hydroxylation of lysine residues in collagen alpha chains and is required for normal assembly and cross-linkling of collagen fibrils. Forms hydroxylysine residues in -Xaa-Lys-Gly- sequences in collagens. These hydroxylysines serve as sites of attachment for carbohydrate units and are essential for the stability of the intermolecular collagen cross-links. This is Procollagen-lysine,2-oxoglutarate 5-dioxygenase 1 (PLOD1) from Homo sapiens (Human).